The following is a 308-amino-acid chain: Cyclin-D2-1 (308 aa).

The disordered stretch occupies residues 286–308 (EGLSYDSSSPPPPKRRKRSPPGT). Residues 298–308 (PKRRKRSPPGT) show a composition bias toward basic residues.

It belongs to the cyclin family. Cyclin D subfamily.

The polypeptide is Cyclin-D2-1 (CYCD2-1) (Oryza sativa subsp. japonica (Rice)).